The sequence spans 39 residues: Mating pheromone Er-11 (39 aa).

3 disulfides stabilise this stretch: C3/C19, C10/C34, and C15/C26.

As to quaternary structure, homodimer.

It is found in the secreted. Its function is as follows. Mating ciliate pheromones (or gamones) are diffusible extracellular communication signals that distinguish different intraspecific classes of cells commonly referred to as 'mating types'. They prepare the latter for conjugation by changing their cell surface properties. This Euplotes raikovi protein is Mating pheromone Er-11 (MAT11).